A 346-amino-acid polypeptide reads, in one-letter code: Melatonin receptor type 1C (346 aa).

At 1–26 (MERPGSNGSCSGCRLEGGPAARAASG) the chain is on the extracellular side. N7 carries an N-linked (GlcNAc...) asparagine glycan. The helical transmembrane segment at 27 to 47 (LAAVLIVTIVVDVLGNALVIL) threads the bilayer. Over 48–60 (SVLRNKKLRNAGN) the chain is Cytoplasmic. Residues 61 to 81 (IFVVSLSVADLVVAVYPYPLI) form a helical membrane-spanning segment. Over 82 to 99 (LSAIFHNGWTMGNIHCQI) the chain is Extracellular. C97 and C174 are disulfide-bonded. The helical transmembrane segment at 100–120 (SGFLMGLSVIGSIFNITAIAI) threads the bilayer. The Cytoplasmic segment spans residues 121-139 (NRYCYICHSLRYDKLFNLK). A helical membrane pass occupies residues 140–160 (NTCCYICLTWTLTVVAIVPNF). At 161 to 184 (FVGSLQYDPRIYSCTFAQTVSTSY) the chain is on the extracellular side. The chain crosses the membrane as a helical span at residues 185-205 (TITVVVVHFIVPLSIVTFCYL). Topologically, residues 206–237 (RIWILVIQVKHRVRQDCKQKIRAADIRNFLTM) are cytoplasmic. The helical transmembrane segment at 238–258 (FVVFVLFAVCWGPLNFIGLAV) threads the bilayer. Residues 259-271 (SINPSKVQPHIPE) lie on the Extracellular side of the membrane. Residues 272 to 292 (WLFVLSYFMAYFNSCLNAVIY) traverse the membrane as a helical segment. Topologically, residues 293–346 (GLLNQNFRKEYKRILLMLRTPRLLFIDVSKGGTEGLKSKPSPAVTNNNQAEIHL) are cytoplasmic. The tract at residues 326–346 (EGLKSKPSPAVTNNNQAEIHL) is disordered. Residues 335-346 (AVTNNNQAEIHL) are compositionally biased toward polar residues.

Belongs to the G-protein coupled receptor 1 family. As to expression, expressed in optic tectum, neostriatum, hypothalamus, thalamus and pineal gland, less in cerebellum and retina.

It localises to the cell membrane. Functionally, high affinity receptor for melatonin. The activity of this receptor is mediated by pertussis toxin sensitive G proteins that inhibits adenylate cyclase activity. This Gallus gallus (Chicken) protein is Melatonin receptor type 1C.